A 303-amino-acid polypeptide reads, in one-letter code: uncharacterized protein (303 aa).

A signal peptide spans 1-24 (MNRIALVFLYSLFLFNLAIGRVES). N-linked (GlcNAc...) asparagine glycosylation is present at N116. A disordered region spans residues 124–179 (FTRQQQKKSHDDDDDDDDSDSDESKEEEEKKKRDRKHRRDKRQAITQGSQNNTDPN). Residues 135–149 (DDDDDDDSDSDESKE) are compositionally biased toward acidic residues. A compositionally biased stretch (basic residues) spans 155 to 164 (KRDRKHRRDK). Over residues 167–178 (AITQGSQNNTDP) the composition is skewed to polar residues.

This is an uncharacterized protein from Caenorhabditis elegans.